A 309-amino-acid chain; its full sequence is MASEATVESVETKVESPIVESPVDQGLLESIKNFMDDLAVVTENENFQDYHTIVRRIDETKVKSYNKLVGGFREFFSLNKTALMEGNFEGLIEPHISYKTESGSFFFNFQTTYLETDEANQEIIKEHLNHIWAQIRSENKCPEQLYIDEIFQKLKNKDQLTMDDQLIRDLFTKFQTANFNVTALIRAGCSKAREFLTNNGSQKSSSTFRLIETIENVNVDNFTQMDFMALISKISAIFSESGESNPLNLCLSSLFGGGNTNQPSLTSMFPFPTPPLPDNVLLDNLDQLTLEQQSETTGDDDHHSFEPEK.

This is an uncharacterized protein from Aedes vexans (Inland floodwater mosquito).